The following is a 703-amino-acid chain: Harmonin-binding protein USHBP1 (703 aa).

Residues 1–15 (MSARATRPRSRRGRH) show a composition bias toward basic residues. Disordered regions lie at residues 1–113 (MSAR…PPGN) and 138–172 (HQPPSHSGPMEFEGTSEGGAGSLGKQEGAGSCQRE). A coiled-coil region spans residues 189–227 (SREDELVRTQASLEAIRAEKETLQKEVQELQDSLLRLEP). The segment at 228–256 (CPHLSHNQAGGSGSGSSSSEADREPWETQ) is disordered. The stretch at 289–309 (EMHIMEAQMEQLRGSIEKLKC) forms a coiled coil. The disordered stretch occupies residues 396–416 (MDAGAQQNPQPSPEGSSVDKP). Residues 400-410 (AQQNPQPSPEG) show a composition bias toward polar residues. Residues 476 to 513 (RLEKTQIQQDLVAAREALADLMLRLQLVRREKRGLELR) are a coiled coil. Residues 540 to 583 (AGGANSSGGHSSGGGSSGDEEEWYQGLPAVPGGTSGIDGGQVGR) form a disordered region. Over residues 572 to 581 (GTSGIDGGQV) the composition is skewed to gly residues. A coiled-coil region spans residues 596 to 681 (ASLTRTLDLQ…QAEEVAVLEA (86 aa)).

The protein belongs to the MCC family. As to quaternary structure, interacts via its C-terminus with the first PDZ domain of USH1C. Highest level of expression in heart, and moderate to low expression in skeletal muscle, kidney, liver, small intestine, placenta and lung.

The chain is Harmonin-binding protein USHBP1 from Homo sapiens (Human).